Reading from the N-terminus, the 183-residue chain is uncharacterized protein (183 aa).

Transmembrane regions (helical) follow at residues 26–48 (FVAI…IIFY), 72–91 (LLVR…KVFI), 104–121 (IIEA…LIVF), and 125–147 (FTFW…YVLL).

The protein resides in the cell membrane. This is an uncharacterized protein from Aquifex aeolicus (strain VF5).